The primary structure comprises 248 residues: MSPSATVFDIGGNAVGTLQLVGHLFDSDPNLHLIHQVVVAQQAAFRQGTHKTKSRAEVSGSGRKPFRQKGTGNARCGSTRAPQMRGGGVVHGPVPRNYVHRTPKKMIKAALAGCLTNRARAGRVHIVDSFGDTPSVADALTLFQITGLSSKLLVVAQASDSVAYRSVRNIPGVRLVHVGQLNSYDVLRSDDVLFTRGAYNVFVGPSGDLAFSEDRDNPGTSLPKSPTPEDSSDATKARSSRHDDRTGA.

Disordered stretches follow at residues 48–96 and 210–248; these read GTHK…PVPR and AFSE…RTGA. Basic and acidic residues predominate over residues 233 to 248; sequence DATKARSSRHDDRTGA.

Belongs to the universal ribosomal protein uL4 family. As to quaternary structure, part of the 50S ribosomal subunit.

In terms of biological role, one of the primary rRNA binding proteins, this protein initially binds near the 5'-end of the 23S rRNA. It is important during the early stages of 50S assembly. It makes multiple contacts with different domains of the 23S rRNA in the assembled 50S subunit and ribosome. Its function is as follows. Forms part of the polypeptide exit tunnel. In Tropheryma whipplei (strain Twist) (Whipple's bacillus), this protein is Large ribosomal subunit protein uL4.